Consider the following 201-residue polypeptide: Recombination protein RecR (201 aa).

Residues 60–75 (CSRCGNVDTVDPCTVC) form a C4-type zinc finger. In terms of domain architecture, Toprim spans 83-178 (SIIIVVEDVS…KITRLAHGVP (96 aa)).

This sequence belongs to the RecR family.

Its function is as follows. May play a role in DNA repair. It seems to be involved in an RecBC-independent recombinational process of DNA repair. It may act with RecF and RecO. This chain is Recombination protein RecR, found in Rhizobium leguminosarum bv. trifolii (strain WSM2304).